A 418-amino-acid polypeptide reads, in one-letter code: Alditol oxidase (418 aa).

The FAD-binding PCMH-type domain occupies I13–A179. Residues V41–S47, S106, S111, G114, T118–H121, and V169 each bind FAD. H46 bears the Pros-8alpha-FAD histidine mark. Residue S106 participates in D-sorbitol binding. S106 serves as a coordination point for xylitol. D-sorbitol is bound by residues E320, R322, and T345. Positions 320, 322, and 345 each coordinate xylitol. R322 provides a ligand contact to FAD. FAD is bound at residue H372. K375 serves as a coordination point for D-sorbitol. K375 contacts xylitol.

Belongs to the oxygen-dependent FAD-linked oxidoreductase family. In terms of assembly, monomer. Requires FAD as cofactor.

It carries out the reaction an alditol + O2 = an aldose + H2O2. The enzyme catalyses xylitol + O2 = D-xylose + H2O2. It catalyses the reaction D-sorbitol + O2 = D-glucose + H2O2. Functionally, oxidase that performs selective oxidation of the terminal primary hydroxyl group of several alditols, with a reduction of O2 to H2O2. Shows highest activity on xylitol and D-sorbitol, and a poor efficiency with D-mannitol and L-threitol. This chain is Alditol oxidase (xyoA), found in Streptomyces coelicolor (strain ATCC BAA-471 / A3(2) / M145).